The chain runs to 492 residues: Trigger factor (492 aa).

The PPIase FKBP-type domain maps to 169-254 (GDRVSIDYVG…VKEVSKPGEL (86 aa)). The disordered stretch occupies residues 441-492 (LMADDEDAETTTKAKPAKKAAAKKAEAKANEDEAEEPKKKAAPKKKAAKDAE). The span at 463 to 479 (KKAEAKANEDEAEEPKK) shows a compositional bias: basic and acidic residues. Basic residues predominate over residues 480–492 (KAAPKKKAAKDAE).

This sequence belongs to the FKBP-type PPIase family. Tig subfamily.

It localises to the cytoplasm. It catalyses the reaction [protein]-peptidylproline (omega=180) = [protein]-peptidylproline (omega=0). Functionally, involved in protein export. Acts as a chaperone by maintaining the newly synthesized protein in an open conformation. Functions as a peptidyl-prolyl cis-trans isomerase. This chain is Trigger factor, found in Mesorhizobium japonicum (strain LMG 29417 / CECT 9101 / MAFF 303099) (Mesorhizobium loti (strain MAFF 303099)).